Reading from the N-terminus, the 503-residue chain is Opine oxidase subunit A (503 aa).

To T-protein and to dimethylglycine dehydrogenase. In terms of assembly, heterodimer of a subunit A and a subunit B.

The protein operates within opine metabolism; octopine degradation. Functionally, oxidative cleavage of octopine into L-arginine and pyruvate. This Agrobacterium tumefaciens (strain Ach5) protein is Opine oxidase subunit A (ooxA).